Consider the following 385-residue polypeptide: S-adenosylmethionine synthase (385 aa).

An ATP-binding site is contributed by His16. Residue Asp18 coordinates Mg(2+). K(+) is bound at residue Glu44. L-methionine is bound by residues Glu57 and Gln100. The segment at 100–110 (QSPDINQGVDR) is flexible loop. Residues 164–166 (DGK), 230–231 (KF), Asp239, 245–246 (RK), Ala262, and Lys266 contribute to the ATP site. Residue Asp239 coordinates L-methionine. L-methionine is bound at residue Lys270.

This sequence belongs to the AdoMet synthase family. Homotetramer; dimer of dimers. It depends on Mg(2+) as a cofactor. Requires K(+) as cofactor.

It localises to the cytoplasm. The enzyme catalyses L-methionine + ATP + H2O = S-adenosyl-L-methionine + phosphate + diphosphate. Its pathway is amino-acid biosynthesis; S-adenosyl-L-methionine biosynthesis; S-adenosyl-L-methionine from L-methionine: step 1/1. In terms of biological role, catalyzes the formation of S-adenosylmethionine (AdoMet) from methionine and ATP. The overall synthetic reaction is composed of two sequential steps, AdoMet formation and the subsequent tripolyphosphate hydrolysis which occurs prior to release of AdoMet from the enzyme. This Helicobacter pylori (strain G27) protein is S-adenosylmethionine synthase.